Here is a 237-residue protein sequence, read N- to C-terminus: Demethylmenaquinone methyltransferase (237 aa).

Residues Thr-58, Asp-79, and Asn-106–Ala-107 each bind S-adenosyl-L-methionine.

The protein belongs to the class I-like SAM-binding methyltransferase superfamily. MenG/UbiE family.

It carries out the reaction a 2-demethylmenaquinol + S-adenosyl-L-methionine = a menaquinol + S-adenosyl-L-homocysteine + H(+). The protein operates within quinol/quinone metabolism; menaquinone biosynthesis; menaquinol from 1,4-dihydroxy-2-naphthoate: step 2/2. Methyltransferase required for the conversion of demethylmenaquinol (DMKH2) to menaquinol (MKH2). The sequence is that of Demethylmenaquinone methyltransferase from Listeria innocua serovar 6a (strain ATCC BAA-680 / CLIP 11262).